Consider the following 557-residue polypeptide: Dihydroxy-acid dehydratase (557 aa).

D78 serves as a coordination point for Mg(2+). C119 is a [2Fe-2S] cluster binding site. Positions 120 and 121 each coordinate Mg(2+). K121 is modified (N6-carboxylysine). C192 contacts [2Fe-2S] cluster. E446 serves as a coordination point for Mg(2+). S472 (proton acceptor) is an active-site residue.

Belongs to the IlvD/Edd family. In terms of assembly, homodimer. Requires [2Fe-2S] cluster as cofactor. The cofactor is Mg(2+).

It catalyses the reaction (2R)-2,3-dihydroxy-3-methylbutanoate = 3-methyl-2-oxobutanoate + H2O. It carries out the reaction (2R,3R)-2,3-dihydroxy-3-methylpentanoate = (S)-3-methyl-2-oxopentanoate + H2O. Its pathway is amino-acid biosynthesis; L-isoleucine biosynthesis; L-isoleucine from 2-oxobutanoate: step 3/4. It functions in the pathway amino-acid biosynthesis; L-valine biosynthesis; L-valine from pyruvate: step 3/4. In terms of biological role, functions in the biosynthesis of branched-chain amino acids. Catalyzes the dehydration of (2R,3R)-2,3-dihydroxy-3-methylpentanoate (2,3-dihydroxy-3-methylvalerate) into 2-oxo-3-methylpentanoate (2-oxo-3-methylvalerate) and of (2R)-2,3-dihydroxy-3-methylbutanoate (2,3-dihydroxyisovalerate) into 2-oxo-3-methylbutanoate (2-oxoisovalerate), the penultimate precursor to L-isoleucine and L-valine, respectively. The protein is Dihydroxy-acid dehydratase of Campylobacter fetus subsp. fetus (strain 82-40).